The following is a 451-amino-acid chain: Phosphoglucosamine mutase (451 aa).

Serine 107 acts as the Phosphoserine intermediate in catalysis. The Mg(2+) site is built by serine 107, aspartate 246, aspartate 248, and aspartate 250. Serine 107 carries the post-translational modification Phosphoserine.

This sequence belongs to the phosphohexose mutase family. Requires Mg(2+) as cofactor. Activated by phosphorylation.

It catalyses the reaction alpha-D-glucosamine 1-phosphate = D-glucosamine 6-phosphate. In terms of biological role, catalyzes the conversion of glucosamine-6-phosphate to glucosamine-1-phosphate. This Burkholderia multivorans (strain ATCC 17616 / 249) protein is Phosphoglucosamine mutase.